Reading from the N-terminus, the 95-residue chain is UPF0473 protein ABC1595 (95 aa).

Belongs to the UPF0473 family.

The protein is UPF0473 protein ABC1595 of Shouchella clausii (strain KSM-K16) (Alkalihalobacillus clausii).